Consider the following 572-residue polypeptide: Hemagglutinin-neuraminidase (572 aa).

The Intravirion segment spans residues 1-31; it reads MEYWKHTNHGKDACNELGTSMATHGNKITNK. Residues 32-52 form a helical membrane-spanning segment; that stretch reads ITYILWTIILVLLSIIFIIVL. Topologically, residues 53-572 are virion surface; sequence INSIKSEKAH…FKTEIPKSCS (520 aa). 2 cysteine pairs are disulfide-bonded: cysteine 190-cysteine 214 and cysteine 256-cysteine 269. An involved in neuraminidase activity region spans residues 252–257; that stretch reads NRKSCS. N-linked (GlcNAc...) asparagine; by host glycans are attached at residues asparagine 308 and asparagine 351. Cystine bridges form between cysteine 355–cysteine 469 and cysteine 463–cysteine 473. N-linked (GlcNAc...) asparagine; by host glycosylation is present at asparagine 523. Cysteines 535 and 544 form a disulfide.

It belongs to the paramyxoviruses hemagglutinin-neuraminidase family. Homotetramer; composed of disulfide-linked homodimers. Interacts with F protein trimer.

Its subcellular location is the virion membrane. It is found in the host cell membrane. The catalysed reaction is Hydrolysis of alpha-(2-&gt;3)-, alpha-(2-&gt;6)-, alpha-(2-&gt;8)- glycosidic linkages of terminal sialic acid residues in oligosaccharides, glycoproteins, glycolipids, colominic acid and synthetic substrates.. In terms of biological role, attaches the virus to sialic acid-containing cell receptors and thereby initiating infection. Binding of HN protein to the receptor induces a conformational change that allows the F protein to trigger virion/cell membranes fusion. Its function is as follows. Neuraminidase activity ensures the efficient spread of the virus by dissociating the mature virions from the neuraminic acid containing glycoproteins. In Homo sapiens (Human), this protein is Hemagglutinin-neuraminidase (HN).